The primary structure comprises 155 residues: 17.6 kDa class II heat shock protein (155 aa).

Residues 38 to 155 (DAKAMAATPA…KPKTIQVQVA (118 aa)) enclose the sHSP domain.

Belongs to the small heat shock protein (HSP20) family. In terms of assembly, may form oligomeric structures.

It localises to the cytoplasm. The sequence is that of 17.6 kDa class II heat shock protein (HSP17.6) from Arabidopsis thaliana (Mouse-ear cress).